Reading from the N-terminus, the 116-residue chain is Large ribosomal subunit protein uL18 (116 aa).

It belongs to the universal ribosomal protein uL18 family. As to quaternary structure, part of the 50S ribosomal subunit; part of the 5S rRNA/L5/L18/L25 subcomplex. Contacts the 5S and 23S rRNAs.

Functionally, this is one of the proteins that bind and probably mediate the attachment of the 5S RNA into the large ribosomal subunit, where it forms part of the central protuberance. The protein is Large ribosomal subunit protein uL18 of Shewanella halifaxensis (strain HAW-EB4).